We begin with the raw amino-acid sequence, 349 residues long: Oxygen-dependent coproporphyrinogen-III oxidase (349 aa).

Disordered regions lie at residues 1–21 (MGAS…KRAR) and 37–60 (SLDG…GRSK). Ser-105 contacts substrate. The a divalent metal cation site is built by His-109 and His-119. Residue His-119 is the Proton donor of the active site. 121–123 (NYR) is a binding site for substrate. A divalent metal cation-binding residues include His-153 and His-183. The segment at 273–308 (YAEFNLVWDRGTIFGLQTNGRTESILMSLPPLARWE) is important for dimerization.

Belongs to the aerobic coproporphyrinogen-III oxidase family. As to quaternary structure, homodimer. Requires a divalent metal cation as cofactor.

Its subcellular location is the cytoplasm. The enzyme catalyses coproporphyrinogen III + O2 + 2 H(+) = protoporphyrinogen IX + 2 CO2 + 2 H2O. It participates in porphyrin-containing compound metabolism; protoporphyrin-IX biosynthesis; protoporphyrinogen-IX from coproporphyrinogen-III (O2 route): step 1/1. In terms of biological role, involved in the heme and chlorophyll biosynthesis. Catalyzes the aerobic oxidative decarboxylation of propionate groups of rings A and B of coproporphyrinogen-III to yield the vinyl groups in protoporphyrinogen-IX. This chain is Oxygen-dependent coproporphyrinogen-III oxidase, found in Prochlorococcus marinus (strain MIT 9313).